The following is a 590-amino-acid chain: Glutamine--tRNA ligase (590 aa).

Positions 55 to 65 match the 'HIGH' region motif; the sequence is PEPNGYLHIGH. ATP-binding positions include 56 to 58 and 62 to 68; these read EPN and HIGHAKS. L-glutamine is bound by residues Asp-93 and Tyr-238. ATP is bound by residues Thr-257 and 292 to 293; that span reads RL. A 'KMSKS' region motif is present at residues 299 to 303; sequence ITSKR.

This sequence belongs to the class-I aminoacyl-tRNA synthetase family. In terms of assembly, monomer.

It is found in the cytoplasm. The catalysed reaction is tRNA(Gln) + L-glutamine + ATP = L-glutaminyl-tRNA(Gln) + AMP + diphosphate. This is Glutamine--tRNA ligase from Polynucleobacter asymbioticus (strain DSM 18221 / CIP 109841 / QLW-P1DMWA-1) (Polynucleobacter necessarius subsp. asymbioticus).